The following is an 83-amino-acid chain: Colicin-E5 immunity protein in ColE9 (83 aa).

This is Colicin-E5 immunity protein in ColE9 from Escherichia coli.